The following is a 524-amino-acid chain: Zinc finger CCCH-type with G patch domain-containing protein (524 aa).

Residues 105 to 142 (SEESQPLGSNDETSTCSKGSEEEEEEEEEEEDNTSGMK) form a disordered region. Residues 106 to 122 (EESQPLGSNDETSTCSK) show a composition bias toward polar residues. A compositionally biased stretch (acidic residues) spans 125–137 (EEEEEEEEEEEDN). The C3H1-type zinc finger occupies 184–210 (KAMKPCPFFLDGKCLFNDNCRFSHGQV). Residues 279–298 (RGSDSSSSSSSDEEEDGAAE) are disordered. One can recognise a G-patch domain in the interval 326–372 (TRGIGSKLLVRMGYEFGKGLGRNAEGRVEPIQAVVLPKGKSLDQCME). Disordered stretches follow at residues 375 to 402 (QRKK…GGAK) and 500 to 524 (GLQQ…MTEF). Residues 376-393 (RKKAGGKHKHKTSKRRPK) show a composition bias toward basic residues.

The protein resides in the nucleus. Functionally, transcription repressor that specifically binds the 5'-GGAG[GA]A[GA]A-3' consensus sequence. Represses transcription by recruiting the chromatin multiprotein complex NuRD to target promoters. Negatively regulates expression of EGFR, a gene involved in cell proliferation, survival and migration. This Xenopus laevis (African clawed frog) protein is Zinc finger CCCH-type with G patch domain-containing protein (zgpat).